The sequence spans 284 residues: Deoxyribonuclease-1 (284 aa).

The N-terminal stretch at 1–22 (MRYTGLMGILLTLVNLLQLAAT) is a signal peptide. Asparagine 40 is a glycosylation site (N-linked (GlcNAc...) asparagine). The active site involves glutamate 100. Cysteine 123 and cysteine 126 are joined by a disulfide. Residue asparagine 128 is glycosylated (N-linked (GlcNAc...) asparagine). Residue histidine 156 is part of the active site. The cysteines at positions 195 and 231 are disulfide-linked.

It belongs to the DNase I family. Requires Ca(2+) as cofactor. Mg(2+) serves as cofactor.

The protein localises to the secreted. It is found in the zymogen granule. Its subcellular location is the nucleus envelope. It catalyses the reaction Endonucleolytic cleavage to 5'-phosphodinucleotide and 5'-phosphooligonucleotide end-products.. In terms of biological role, serum endocuclease secreted into body fluids by a wide variety of exocrine and endocrine organs. Expressed by non-hematopoietic tissues and preferentially cleaves protein-free DNA. Among other functions, seems to be involved in cell death by apoptosis. Binds specifically to G-actin and blocks actin polymerization. Together with DNASE1L3, plays a key role in degrading neutrophil extracellular traps (NETs). NETs are mainly composed of DNA fibers and are released by neutrophils to bind pathogens during inflammation. Degradation of intravascular NETs by DNASE1 and DNASE1L3 is required to prevent formation of clots that obstruct blood vessels and cause organ damage following inflammation. The sequence is that of Deoxyribonuclease-1 (Dnase1) from Rattus norvegicus (Rat).